The primary structure comprises 426 residues: Enolase (426 aa).

Gln163 lines the (2R)-2-phosphoglycerate pocket. Glu205 acts as the Proton donor in catalysis. Residues Asp242, Glu286, and Asp313 each coordinate Mg(2+). 4 residues coordinate (2R)-2-phosphoglycerate: Lys338, Arg367, Ser368, and Lys389. Lys338 serves as the catalytic Proton acceptor.

Belongs to the enolase family. The cofactor is Mg(2+).

It is found in the cytoplasm. Its subcellular location is the secreted. The protein localises to the cell surface. The enzyme catalyses (2R)-2-phosphoglycerate = phosphoenolpyruvate + H2O. The protein operates within carbohydrate degradation; glycolysis; pyruvate from D-glyceraldehyde 3-phosphate: step 4/5. Its function is as follows. Catalyzes the reversible conversion of 2-phosphoglycerate (2-PG) into phosphoenolpyruvate (PEP). It is essential for the degradation of carbohydrates via glycolysis. The chain is Enolase from Syntrophobacter fumaroxidans (strain DSM 10017 / MPOB).